Consider the following 582-residue polypeptide: Solute carrier family 15 member 3 (582 aa).

The tract at residues 1–20 (MSALRAEQQPSRSGERQPLV) is disordered. 4 consecutive transmembrane segments (helical) span residues 33 to 53 (TAAA…FGVT), 77 to 97 (LLFL…ADVY), 102 to 122 (LAIS…LTTI), and 155 to 175 (PYCA…ASSV). An N-linked (GlcNAc...) asparagine glycan is attached at Asn-178. A helical transmembrane segment spans residues 201–221 (WFYWSINLGAILSLLVVAFIE). N-linked (GlcNAc...) asparagine glycosylation occurs at Asn-223. A run of 2 helical transmembrane segments spans residues 232-252 (IIVG…PVFI) and 312-332 (FQVL…WMVY). Asn-357 is a glycosylation site (N-linked (GlcNAc...) asparagine). 2 helical membrane-spanning segments follow: residues 371-391 (IPEA…VPVK) and 409-429 (LQKM…AGVL). A glycan (N-linked (GlcNAc...) asparagine) is linked at Asn-440. 3 consecutive transmembrane segments (helical) span residues 466–485 (YLLI…EFAY), 498–518 (GIFF…VALL), and 541–561 (LYFF…LWIA). The N-linked (GlcNAc...) asparagine glycan is linked to Asn-575.

It belongs to the major facilitator superfamily. Proton-dependent oligopeptide transporter (POT/PTR) (TC 2.A.17) family. As to expression, abundant expression in lung, spleen and thymus, and detected faintly in brain, liver, adrenal gland and heart at protein level.

Its subcellular location is the lysosome membrane. It localises to the endosome membrane. The catalysed reaction is N-acetyl-D-muramoyl-L-alanyl-D-isoglutamine(out) + n H(+)(out) = N-acetyl-D-muramoyl-L-alanyl-D-isoglutamine(in) + n H(+)(in). It carries out the reaction glycylglycylglycine(out) + n H(+)(out) = glycylglycylglycine(in) + n H(+)(in). It catalyses the reaction carnosine(out) + n H(+)(out) = carnosine(in) + n H(+)(in). The enzyme catalyses L-histidine(out) + n H(+)(out) = L-histidine(in) + n H(+)(in). Functionally, proton-coupled amino-acid transporter that transports free histidine and certain di- and tripeptides, and is involved in innate immune response. Also able to transport carnosine. Involved in the detection of microbial pathogens by toll-like receptors (TLRs) and NOD-like receptors (NLRs), probably by mediating transport of bacterial peptidoglycans across the endolysosomal membrane: catalyzes the transport of certain bacterial peptidoglycans, such as muramyl dipeptide (MDP), the NOD2 ligand. The sequence is that of Solute carrier family 15 member 3 (Slc15a3) from Rattus norvegicus (Rat).